The primary structure comprises 204 residues: Ubiquitin-conjugating enzyme E2 T (204 aa).

Residues 2-152 (QRASRLKKEL…AKQWTEAHAR (151 aa)) enclose the UBC core domain. Cys-86 acts as the Glycyl thioester intermediate in catalysis. Residues Lys-91 and Lys-181 each participate in a glycyl lysine isopeptide (Lys-Gly) (interchain with G-Cter in ubiquitin) cross-link. The tract at residues 150–204 (HARQKQKADEEELGTSSEVGDSEESHSTQKRKARPLGGMEKKFSPDVQRVYPGPS) is disordered. Glycyl lysine isopeptide (Lys-Gly) (interchain with G-Cter in SUMO2) cross-links involve residues Lys-190 and Lys-191. At Ser-193 the chain carries Phosphoserine.

This sequence belongs to the ubiquitin-conjugating enzyme family. In terms of assembly, interacts with FANCL and BRCA1. In terms of processing, auto-ubiquitinated. Effects of auto-monoubiquitination at Lys-91 and Lys-181 are unclear.

The protein resides in the nucleus. It catalyses the reaction S-ubiquitinyl-[E1 ubiquitin-activating enzyme]-L-cysteine + [E2 ubiquitin-conjugating enzyme]-L-cysteine = [E1 ubiquitin-activating enzyme]-L-cysteine + S-ubiquitinyl-[E2 ubiquitin-conjugating enzyme]-L-cysteine.. Its pathway is protein modification; protein ubiquitination. Its function is as follows. Accepts ubiquitin from the E1 complex and catalyzes its covalent attachment to other proteins. Catalyzes monoubiquitination. Involved in mitomycin-C (MMC)-induced DNA repair: acts as a specific E2 ubiquitin-conjugating enzyme for the Fanconi anemia complex by associating with E3 ubiquitin-protein ligase FANCL and catalyzing monoubiquitination of FANCD2, a key step in the DNA damage pathway. Also mediates monoubiquitination of FANCL and FANCI. May contribute to ubiquitination and degradation of BRCA1. In vitro able to promote polyubiquitination using all 7 ubiquitin Lys residues, but may prefer 'Lys-11'-, 'Lys-27'-, 'Lys-48'- and 'Lys-63'-linked polyubiquitination. This Mus musculus (Mouse) protein is Ubiquitin-conjugating enzyme E2 T (Ube2t).